Reading from the N-terminus, the 249-residue chain is U2 small nuclear ribonucleoprotein A' (249 aa).

LRR repeat units follow at residues Lys-20–Glu-41, Gln-43–Asn-64, Arg-65–Leu-87, and Lys-89–Ala-110. The LRRCT domain occupies Asn-123–Leu-161.

Belongs to the U2 small nuclear ribonucleoprotein A family.

The protein resides in the nucleus. The protein localises to the nucleus speckle. Its function is as follows. This protein is associated with sn-RNP U2. It helps the A' protein to bind stem loop IV of U2 snRNA. This chain is U2 small nuclear ribonucleoprotein A', found in Arabidopsis thaliana (Mouse-ear cress).